A 515-amino-acid chain; its full sequence is Maturase K (515 aa).

The protein belongs to the intron maturase 2 family. MatK subfamily.

It is found in the plastid. Its subcellular location is the chloroplast. Functionally, usually encoded in the trnK tRNA gene intron. Probably assists in splicing its own and other chloroplast group II introns. This is Maturase K from Pinus cembra (Swiss stone pine).